Consider the following 557-residue polypeptide: Formate--tetrahydrofolate ligase 2 (557 aa).

66-73 (TPAGEGKT) contributes to the ATP binding site.

This sequence belongs to the formate--tetrahydrofolate ligase family.

It catalyses the reaction (6S)-5,6,7,8-tetrahydrofolate + formate + ATP = (6R)-10-formyltetrahydrofolate + ADP + phosphate. It participates in one-carbon metabolism; tetrahydrofolate interconversion. This chain is Formate--tetrahydrofolate ligase 2, found in Streptococcus pyogenes serotype M1.